A 255-amino-acid polypeptide reads, in one-letter code: Endonuclease 8 2 (255 aa).

Catalysis depends on P2, which acts as the Schiff-base intermediate with DNA. E3 functions as the Proton donor in the catalytic mechanism. K51 acts as the Proton donor; for beta-elimination activity in catalysis. DNA contacts are provided by Q67 and N164. The FPG-type zinc-finger motif lies at 221–255; it reads WVYGRAGQGCRRCGTLIAYDTTDERVRYWCPACQR. The active-site Proton donor; for delta-elimination activity is the R245.

The protein belongs to the FPG family. It depends on Zn(2+) as a cofactor.

The enzyme catalyses 2'-deoxyribonucleotide-(2'-deoxyribose 5'-phosphate)-2'-deoxyribonucleotide-DNA = a 3'-end 2'-deoxyribonucleotide-(2,3-dehydro-2,3-deoxyribose 5'-phosphate)-DNA + a 5'-end 5'-phospho-2'-deoxyribonucleoside-DNA + H(+). Its function is as follows. Involved in base excision repair of DNA damaged by oxidation or by mutagenic agents. Acts as a DNA glycosylase that recognizes and removes damaged bases. Has AP (apurinic/apyrimidinic) lyase activity and introduces nicks in the DNA strand. Cleaves the DNA backbone by beta-delta elimination to generate a single-strand break at the site of the removed base with both 3'- and 5'-phosphates. The sequence is that of Endonuclease 8 2 (nei2) from Mycobacterium bovis (strain ATCC BAA-935 / AF2122/97).